Reading from the N-terminus, the 836-residue chain is DNA gyrase subunit A (836 aa).

Residues 46–510 enclose the Topo IIA-type catalytic domain; sequence LPDARDGLKP…ISEEIDDESL (465 aa). Residue Tyr134 is the O-(5'-phospho-DNA)-tyrosine intermediate of the active site. The GyrA-box motif lies at 537–543; the sequence is QHRGGVG.

This sequence belongs to the type II topoisomerase GyrA/ParC subunit family. In terms of assembly, heterotetramer, composed of two GyrA and two GyrB chains. In the heterotetramer, GyrA contains the active site tyrosine that forms a transient covalent intermediate with DNA, while GyrB binds cofactors and catalyzes ATP hydrolysis.

Its subcellular location is the cytoplasm. The enzyme catalyses ATP-dependent breakage, passage and rejoining of double-stranded DNA.. Functionally, a type II topoisomerase that negatively supercoils closed circular double-stranded (ds) DNA in an ATP-dependent manner to modulate DNA topology and maintain chromosomes in an underwound state. Negative supercoiling favors strand separation, and DNA replication, transcription, recombination and repair, all of which involve strand separation. Also able to catalyze the interconversion of other topological isomers of dsDNA rings, including catenanes and knotted rings. Type II topoisomerases break and join 2 DNA strands simultaneously in an ATP-dependent manner. The chain is DNA gyrase subunit A from Mycoplasma genitalium (strain ATCC 33530 / DSM 19775 / NCTC 10195 / G37) (Mycoplasmoides genitalium).